A 327-amino-acid polypeptide reads, in one-letter code: Ubiquinone biosynthesis O-methyltransferase, mitochondrial (327 aa).

S-adenosyl-L-methionine-binding residues include Arg79, Gly142, Asp165, and Phe210. Glu211, Glu214, and His215 together coordinate Mg(2+).

It belongs to the class I-like SAM-binding methyltransferase superfamily. UbiG/COQ3 family. In terms of assembly, component of a multi-subunit COQ enzyme complex, composed of at least COQ3, COQ4, COQ5, COQ6, COQ7 and COQ9. The cofactor is Mg(2+).

The protein resides in the mitochondrion inner membrane. The catalysed reaction is a 3,4-dihydroxy-5-(all-trans-polyprenyl)benzoate + S-adenosyl-L-methionine = a 4-hydroxy-3-methoxy-5-(all-trans-polyprenyl)benzoate + S-adenosyl-L-homocysteine + H(+). It catalyses the reaction a 3-demethylubiquinone + S-adenosyl-L-methionine = a ubiquinone + S-adenosyl-L-homocysteine. It carries out the reaction a 3-demethylubiquinol + S-adenosyl-L-methionine = a ubiquinol + S-adenosyl-L-homocysteine + H(+). It participates in cofactor biosynthesis; ubiquinone biosynthesis. In terms of biological role, O-methyltransferase required for two non-consecutive steps during ubiquinone biosynthesis. Catalyzes the 2 O-methylation of 3,4-dihydroxy-5-(all-trans-polyprenyl)benzoic acid into 4-hydroxy-3-methoxy-5-(all-trans-polyprenyl)benzoic acid. Also catalyzes the last step of ubiquinone biosynthesis by mediating methylation of 3-demethylubiquinone into ubiquinone. Also able to mediate the methylation of 3-demethylubiquinol into ubiquinol. The sequence is that of Ubiquinone biosynthesis O-methyltransferase, mitochondrial from Candida albicans (Yeast).